The primary structure comprises 335 residues: Mitochondrial carrier protein CoAc2 (335 aa).

6 consecutive transmembrane segments (helical) span residues 12-32 (SGPG…AGGV), 75-95 (FYRG…LHYM), 119-139 (LVAG…LDLV), 187-207 (GMAP…YFYE), 225-242 (LGCG…TYPL), and 280-302 (LFSG…FTVY). 3 Solcar repeats span residues 17 to 103 (PLAV…YRRW), 113 to 212 (QGPV…MKSH), and 219 to 308 (KGII…MKVC).

It belongs to the mitochondrial carrier (TC 2.A.29) family. In terms of tissue distribution, expressed throughout the plant.

It localises to the mitochondrion inner membrane. Required for the accumulation of coenzyme A in the mitochondrial matrix. The protein is Mitochondrial carrier protein CoAc2 of Zea mays (Maize).